The sequence spans 225 residues: ATP-dependent Clp protease proteolytic subunit (225 aa).

S123 (nucleophile) is an active-site residue. The active site involves H148.

Belongs to the peptidase S14 family. As to quaternary structure, fourteen ClpP subunits assemble into 2 heptameric rings which stack back to back to give a disk-like structure with a central cavity, resembling the structure of eukaryotic proteasomes.

The protein resides in the cytoplasm. It carries out the reaction Hydrolysis of proteins to small peptides in the presence of ATP and magnesium. alpha-casein is the usual test substrate. In the absence of ATP, only oligopeptides shorter than five residues are hydrolyzed (such as succinyl-Leu-Tyr-|-NHMec, and Leu-Tyr-Leu-|-Tyr-Trp, in which cleavage of the -Tyr-|-Leu- and -Tyr-|-Trp bonds also occurs).. In terms of biological role, cleaves peptides in various proteins in a process that requires ATP hydrolysis. Has a chymotrypsin-like activity. Plays a major role in the degradation of misfolded proteins. This chain is ATP-dependent Clp protease proteolytic subunit, found in Chlorobium chlorochromatii (strain CaD3).